The sequence spans 229 residues: Translin (229 aa).

The interval 86–90 (RFHEH) is DNA/RNA binding. The interval 177–198 (LDSGFRLLNLKNDSLRKRYDGL) is leucine-zipper.

It belongs to the translin family. In terms of assembly, ring-shaped heterooctamer of six TSN and two TSNAX subunits, DNA/RNA binding occurs inside the ring.

It is found in the cytoplasm. The protein resides in the nucleus. In terms of biological role, exhibits both single-stranded and double-stranded endoribonuclease activity. May act as an activator of RNA-induced silencing complex (RISC) by facilitating endonucleolytic cleavage of the siRNA passenger strand. DNA-binding protein that specifically recognizes consensus sequences at the breakpoint junctions in chromosomal translocations, mostly involving immunoglobulin (Ig)/T-cell receptor gene segments. Seems to recognize single-stranded DNA ends generated by staggered breaks occurring at recombination hot spots. The protein is Translin (TSN) of Gallus gallus (Chicken).